Here is a 225-residue protein sequence, read N- to C-terminus: MASPRWAALARDTNETKVKLALSIDGGDLPPDTHPSLLEAAASGHASQSSSSQKISINTGIGFLDHMLHAFAKHAGFSLLLTCQGDLHIDDHHTAEDVCIALGDAFKTALGSAAGIARFGFAYCPLDEALSRAVVDVSNRPFAVVELGLRREKIGDLSCEMIPHCIMSFATAARLTIHVDCIRGENDHHRAESAFKALAVAVRTAVGKVAGREGEVPSTKGTLSV.

The protein belongs to the imidazoleglycerol-phosphate dehydratase family.

The enzyme catalyses D-erythro-1-(imidazol-4-yl)glycerol 3-phosphate = 3-(imidazol-4-yl)-2-oxopropyl phosphate + H2O. It functions in the pathway amino-acid biosynthesis; L-histidine biosynthesis; L-histidine from 5-phospho-alpha-D-ribose 1-diphosphate: step 6/9. The chain is Imidazoleglycerol-phosphate dehydratase (PTH3) from Pyricularia oryzae (strain 70-15 / ATCC MYA-4617 / FGSC 8958) (Rice blast fungus).